The primary structure comprises 528 residues: Lysine--tRNA ligase (528 aa).

A 'HIGH' region motif is present at residues 36 to 44 (PSGTVHIGN). Positions 287–291 (KMSSS) match the 'KMSKS' region motif.

The protein belongs to the class-I aminoacyl-tRNA synthetase family.

The protein localises to the cytoplasm. The enzyme catalyses tRNA(Lys) + L-lysine + ATP = L-lysyl-tRNA(Lys) + AMP + diphosphate. This is Lysine--tRNA ligase (lysS) from Treponema pallidum (strain Nichols).